A 429-amino-acid polypeptide reads, in one-letter code: Enolase (429 aa).

Position 163 (glutamine 163) interacts with (2R)-2-phosphoglycerate. Catalysis depends on glutamate 205, which acts as the Proton donor. Residues aspartate 242, glutamate 286, and aspartate 313 each coordinate Mg(2+). Lysine 338, arginine 367, serine 368, and lysine 389 together coordinate (2R)-2-phosphoglycerate. Lysine 338 (proton acceptor) is an active-site residue.

It belongs to the enolase family. The cofactor is Mg(2+).

It localises to the cytoplasm. The protein resides in the secreted. It is found in the cell surface. It catalyses the reaction (2R)-2-phosphoglycerate = phosphoenolpyruvate + H2O. Its pathway is carbohydrate degradation; glycolysis; pyruvate from D-glyceraldehyde 3-phosphate: step 4/5. Functionally, catalyzes the reversible conversion of 2-phosphoglycerate (2-PG) into phosphoenolpyruvate (PEP). It is essential for the degradation of carbohydrates via glycolysis. The polypeptide is Enolase (Citrifermentans bemidjiense (strain ATCC BAA-1014 / DSM 16622 / JCM 12645 / Bem) (Geobacter bemidjiensis)).